The chain runs to 147 residues: Prefoldin subunit alpha (147 aa).

The protein belongs to the prefoldin alpha subunit family. Heterohexamer of two alpha and four beta subunits.

Its subcellular location is the cytoplasm. Its function is as follows. Molecular chaperone capable of stabilizing a range of proteins. Seems to fulfill an ATP-independent, HSP70-like function in archaeal de novo protein folding. The chain is Prefoldin subunit alpha from Saccharolobus islandicus (strain Y.N.15.51 / Yellowstone #2) (Sulfolobus islandicus).